Reading from the N-terminus, the 77-residue chain is Translation initiation factor IF-1, chloroplastic (77 aa).

The 71-residue stretch at 1–71 (MKEQKWIHEG…TKGRIIYRIR (71 aa)) folds into the S1-like domain.

The protein belongs to the IF-1 family. In terms of assembly, component of the 30S ribosomal translation pre-initiation complex which assembles on the 30S ribosome in the order IF-2 and IF-3, IF-1 and N-formylmethionyl-tRNA(fMet); mRNA recruitment can occur at any time during PIC assembly.

Its subcellular location is the plastid. The protein resides in the chloroplast. Functionally, one of the essential components for the initiation of protein synthesis. Stabilizes the binding of IF-2 and IF-3 on the 30S subunit to which N-formylmethionyl-tRNA(fMet) subsequently binds. Helps modulate mRNA selection, yielding the 30S pre-initiation complex (PIC). Upon addition of the 50S ribosomal subunit IF-1, IF-2 and IF-3 are released leaving the mature 70S translation initiation complex. This is Translation initiation factor IF-1, chloroplastic from Vitis vinifera (Grape).